We begin with the raw amino-acid sequence, 190 residues long: UPF0200 protein OE_4442F (190 aa).

Residue 8–15 participates in ATP binding; the sequence is GMPGSGKS. The interval 120 to 144 is disordered; that stretch reads ARIEDRDRPGDTDGEPLDAREDRER.

Belongs to the UPF0200 family.

This is UPF0200 protein OE_4442F from Halobacterium salinarum (strain ATCC 29341 / DSM 671 / R1).